The primary structure comprises 492 residues: ATP synthase subunit beta, chloroplastic (492 aa).

170–177 (GGAGVGKT) is an ATP binding site.

This sequence belongs to the ATPase alpha/beta chains family. In terms of assembly, F-type ATPases have 2 components, CF(1) - the catalytic core - and CF(0) - the membrane proton channel. CF(1) has five subunits: alpha(3), beta(3), gamma(1), delta(1), epsilon(1). CF(0) has four main subunits: a(1), b(1), b'(1) and c(9-12).

The protein resides in the plastid. The protein localises to the chloroplast thylakoid membrane. It carries out the reaction ATP + H2O + 4 H(+)(in) = ADP + phosphate + 5 H(+)(out). Produces ATP from ADP in the presence of a proton gradient across the membrane. The catalytic sites are hosted primarily by the beta subunits. The polypeptide is ATP synthase subunit beta, chloroplastic (Pinus thunbergii (Japanese black pine)).